Consider the following 163-residue polypeptide: SsrA-binding protein (163 aa).

The span at 138 to 157 shows a compositional bias: basic and acidic residues; sequence EDRRGAIAERESKREMDRAL. Residues 138-163 form a disordered region; sequence EDRRGAIAERESKREMDRALARGRRR.

This sequence belongs to the SmpB family.

The protein localises to the cytoplasm. In terms of biological role, required for rescue of stalled ribosomes mediated by trans-translation. Binds to transfer-messenger RNA (tmRNA), required for stable association of tmRNA with ribosomes. tmRNA and SmpB together mimic tRNA shape, replacing the anticodon stem-loop with SmpB. tmRNA is encoded by the ssrA gene; the 2 termini fold to resemble tRNA(Ala) and it encodes a 'tag peptide', a short internal open reading frame. During trans-translation Ala-aminoacylated tmRNA acts like a tRNA, entering the A-site of stalled ribosomes, displacing the stalled mRNA. The ribosome then switches to translate the ORF on the tmRNA; the nascent peptide is terminated with the 'tag peptide' encoded by the tmRNA and targeted for degradation. The ribosome is freed to recommence translation, which seems to be the essential function of trans-translation. The polypeptide is SsrA-binding protein (Anaeromyxobacter dehalogenans (strain 2CP-1 / ATCC BAA-258)).